The chain runs to 222 residues: LHFPL tetraspan subfamily member 3 protein (222 aa).

Transmembrane regions (helical) follow at residues 22–42 (IGVL…VCFI), 96–116 (FFIG…TLFF), 126–146 (ICAW…MIFP), and 177–197 (ILAI…VVLG).

It belongs to the LHFP family. In terms of tissue distribution, brain-specific.

The protein resides in the membrane. This chain is LHFPL tetraspan subfamily member 3 protein, found in Mus musculus (Mouse).